Here is a 443-residue protein sequence, read N- to C-terminus: Dihydroorotate dehydrogenase (quinone), mitochondrial (443 aa).

The N-terminal 21 residues, 1–21 (MYQRSLFRGVAQGLKRSSVRF), are a transit peptide targeting the mitochondrion. A helical membrane pass occupies residues 38-54 (WKLLSVIGSFTAGVAIY). FMN is bound by residues 122–126 (AGFDK) and Ser-146. Substrate is bound at residue Lys-126. Ser-168 bears the Phosphoserine mark. Position 171–175 (171–175 (NRYGF)) interacts with substrate. Asn-234 and Asn-264 together coordinate FMN. 264-269 (NVSSPN) contributes to the substrate binding site. The Nucleophile role is filled by Ser-267. An FMN-binding site is contributed by Lys-306. Substrate is bound at residue 335 to 336 (NT). FMN is bound by residues Gly-358, Gly-387, and 408–409 (YT).

Belongs to the dihydroorotate dehydrogenase family. Type 2 subfamily. The cofactor is FMN.

Its subcellular location is the mitochondrion inner membrane. It catalyses the reaction (S)-dihydroorotate + a quinone = orotate + a quinol. It functions in the pathway pyrimidine metabolism; UMP biosynthesis via de novo pathway; orotate from (S)-dihydroorotate (quinone route): step 1/1. In terms of biological role, in the de novo pyrimidine biosynthesis pathway, catalyzes the stereospecific oxidation of (S)-dihydroorotate to orotate with reduction of flavin and the transfer of electrons to ubiquinone, which is part of the respiratory chain. Does not use fumarate and NAD as electron acceptors. This is Dihydroorotate dehydrogenase (quinone), mitochondrial (ura3) from Schizosaccharomyces pombe (strain 972 / ATCC 24843) (Fission yeast).